The chain runs to 377 residues: D-alanine--D-alanine ligase (377 aa).

The ATP-grasp domain maps to 137 to 346; sequence KELMTVNGIR…RSQQAEKLIQ (210 aa). Position 167 to 222 (167 to 222) interacts with ATP; the sequence is SKQLGEVVFVKAANQGSSVGVSRVTNAEEYENALRDSFQYDEKLLVEKAVESPTEL. Mg(2+) is bound by residues Asp-300, Glu-313, and Asn-315.

Belongs to the D-alanine--D-alanine ligase family. The cofactor is Mg(2+). Mn(2+) serves as cofactor.

The protein localises to the cytoplasm. The catalysed reaction is 2 D-alanine + ATP = D-alanyl-D-alanine + ADP + phosphate + H(+). Its pathway is cell wall biogenesis; peptidoglycan biosynthesis. Functionally, cell wall formation. This Oenococcus oeni (strain ATCC BAA-331 / PSU-1) protein is D-alanine--D-alanine ligase.